A 95-amino-acid polypeptide reads, in one-letter code: Aspartyl/glutamyl-tRNA(Asn/Gln) amidotransferase subunit C (95 aa).

Residues 74 to 95 (GQALEPAPDADNEHFLVPQVVE) are disordered.

This sequence belongs to the GatC family. Heterotrimer of A, B and C subunits.

The catalysed reaction is L-glutamyl-tRNA(Gln) + L-glutamine + ATP + H2O = L-glutaminyl-tRNA(Gln) + L-glutamate + ADP + phosphate + H(+). It catalyses the reaction L-aspartyl-tRNA(Asn) + L-glutamine + ATP + H2O = L-asparaginyl-tRNA(Asn) + L-glutamate + ADP + phosphate + 2 H(+). Functionally, allows the formation of correctly charged Asn-tRNA(Asn) or Gln-tRNA(Gln) through the transamidation of misacylated Asp-tRNA(Asn) or Glu-tRNA(Gln) in organisms which lack either or both of asparaginyl-tRNA or glutaminyl-tRNA synthetases. The reaction takes place in the presence of glutamine and ATP through an activated phospho-Asp-tRNA(Asn) or phospho-Glu-tRNA(Gln). The polypeptide is Aspartyl/glutamyl-tRNA(Asn/Gln) amidotransferase subunit C (Salinibacter ruber (strain DSM 13855 / M31)).